The sequence spans 282 residues: Transcription factor HES-1 (282 aa).

The tract at residues 1–44 (MPADIMEKNSSSPVAATPASVNTTPDKPKTASEHRKSSKPIMEK) is disordered. The segment covering 10–21 (SSSPVAATPASV) has biased composition (low complexity). A compositionally biased stretch (basic and acidic residues) spans 26–35 (DKPKTASEHR). The bHLH domain maps to 34–91 (HRKSSKPIMEKRRRARINESLSQLKTLILDALKKDSSRHSKLEKADILEMTVKHLRNL). The Orange domain maps to 110–143 (YRAGFSECMNEVTRFLSTCEGVNTEVRTRLLGHL). Disordered regions lie at residues 158–204 (QAHP…GSAP) and 256–282 (TSVGPNAVSPSSGSSLTSDSMWRPWRN). 2 stretches are compositionally biased toward pro residues: residues 164-174 (QAPPPPPPSGP) and 182-202 (FAPPPPPLVPIPGGAAPPPGS). The segment covering 264–275 (SPSSGSSLTSDS) has biased composition (low complexity). Positions 277 to 280 (WRPW) match the WRPW motif motif.

In terms of assembly, interacts with SIRT1. Transcription repression requires formation of a complex with a corepressor protein of the Groucho/TLE family. Interacts (via WPRW motif) with TLE1, and more weakly with TLE2. Interacts with HES6. Interacts with an FA complex, composed of FANCA, FANCF, FANCG and FANCL, but not of FANCC, nor FANCE. As to expression, expressed at high levels in undifferentiated neural precursor cells, but the level of expression decreases as neural differentiation proceeds.

Its subcellular location is the nucleus. Its function is as follows. Transcriptional repressor of genes that require a bHLH protein for their transcription. May act as a negative regulator of myogenesis by inhibiting the functions of MYOD1 and ASH1. Binds DNA on N-box motifs: 5'-CACNAG-3' with high affinity and on E-box motifs: 5'-CANNTG-3' with low affinity. May play a role in a functional FA core complex response to DNA cross-link damage, being required for the stability and nuclear localization of FA core complex proteins, as well as for FANCD2 monoubiquitination in response to DNA damage. This Mus musculus (Mouse) protein is Transcription factor HES-1 (Hes1).